We begin with the raw amino-acid sequence, 82 residues long: uncharacterized protein (82 aa).

Residues 22-82 (LRRSRSSRNG…WPPPCAFTPG (61 aa)) form a disordered region. Basic and acidic residues predominate over residues 47–58 (HRGEPGHPRMEE). Residues 73 to 82 (WPPPCAFTPG) are compositionally biased toward pro residues.

This is an uncharacterized protein from Homo sapiens (Human).